Here is a 303-residue protein sequence, read N- to C-terminus: GTP cyclohydrolase FolE2 (303 aa).

Belongs to the GTP cyclohydrolase IV family.

It carries out the reaction GTP + H2O = 7,8-dihydroneopterin 3'-triphosphate + formate + H(+). Its pathway is cofactor biosynthesis; 7,8-dihydroneopterin triphosphate biosynthesis; 7,8-dihydroneopterin triphosphate from GTP: step 1/1. Converts GTP to 7,8-dihydroneopterin triphosphate. This is GTP cyclohydrolase FolE2 from Exiguobacterium sp. (strain ATCC BAA-1283 / AT1b).